The sequence spans 314 residues: Ribosomal RNA small subunit methyltransferase H (314 aa).

Residues 36 to 38, Asp56, Phe80, Asp102, and Gln109 contribute to the S-adenosyl-L-methionine site; that span reads GGH.

This sequence belongs to the methyltransferase superfamily. RsmH family.

The protein localises to the cytoplasm. The enzyme catalyses cytidine(1402) in 16S rRNA + S-adenosyl-L-methionine = N(4)-methylcytidine(1402) in 16S rRNA + S-adenosyl-L-homocysteine + H(+). Its function is as follows. Specifically methylates the N4 position of cytidine in position 1402 (C1402) of 16S rRNA. The chain is Ribosomal RNA small subunit methyltransferase H from Citrobacter koseri (strain ATCC BAA-895 / CDC 4225-83 / SGSC4696).